The chain runs to 142 residues: Large ribosomal subunit protein uL13 (142 aa).

The protein belongs to the universal ribosomal protein uL13 family. In terms of assembly, part of the 50S ribosomal subunit.

Functionally, this protein is one of the early assembly proteins of the 50S ribosomal subunit, although it is not seen to bind rRNA by itself. It is important during the early stages of 50S assembly. The chain is Large ribosomal subunit protein uL13 from Shewanella denitrificans (strain OS217 / ATCC BAA-1090 / DSM 15013).